The primary structure comprises 489 residues: Probable apyrase 1 (489 aa).

The Cytoplasmic portion of the chain corresponds to 1 to 28 (MRRFSAAAGARQQQQQGEAVSDRVLRFR). The chain crosses the membrane as a helical; Signal-anchor for type II membrane protein span at residues 29 to 49 (GVLVVVLAPVLLISLVLLLMP). The Extracellular segment spans residues 50–489 (RAPASATVEG…GSAIEVASSS (440 aa)). 89–99 (VIFDAGSSGSR) provides a ligand contact to ATP. Glutamate 211 (proton acceptor) is an active-site residue. Position 235-245 (235-245 (GVVDLGGGSVQ)) interacts with ATP.

This sequence belongs to the GDA1/CD39 NTPase family. Ca(2+) is required as a cofactor.

The protein resides in the membrane. It catalyses the reaction a ribonucleoside 5'-triphosphate + 2 H2O = a ribonucleoside 5'-phosphate + 2 phosphate + 2 H(+). In terms of biological role, catalyzes the hydrolysis of phosphoanhydride bonds of nucleoside tri- and di-phosphates. The chain is Probable apyrase 1 (APY1) from Oryza sativa subsp. japonica (Rice).